The following is a 543-amino-acid chain: Keratin, type II cytoskeletal 75 (543 aa).

Positions 1–16 (MSRQSTITFQTSSRRG) are enriched in polar residues. Residues 1–48 (MSRQSTITFQTSSRRGFSTASATTPATSRSRFSSASVTHSPAGSGGLG) are disordered. The tract at residues 1-144 (MSRQSTITFQ…DPNIQRVRKE (144 aa)) is head. Positions 17–36 (FSTASATTPATSRSRFSSAS) are enriched in low complexity. The interval 145-180 (EREQIKTLNNKFASFIDKVRFLEQQNKVLETKWSLL) is coil 1A. In terms of domain architecture, IF rod spans 145–458 (EREQIKTLNN…KLLEGEECRL (314 aa)). Positions 181–199 (QEQGTRTVRQSLEPFFEAY) are linker 1. Positions 200–292 (ITDLRRQLDS…LFEAELCQMQ (93 aa)) are coil 1B. The interval 293 to 315 (TRVSDTSVVLSMDNNRSLDLDSI) is linker 12. The coil 2 stretch occupies residues 316–454 (IAEVKAQYEE…ATYRKLLEGE (139 aa)). Residues 455 to 543 (ECRLSGEGVS…TSSSRKSYKH (89 aa)) form a tail region. The segment at 511–543 (SSFSNSSSRGLGGSGSSFKFVSTTSSSRKSYKH) is disordered. A compositionally biased stretch (low complexity) spans 526 to 543 (SSFKFVSTTSSSRKSYKH).

Belongs to the intermediate filament family. Heterodimer of a type I and a type II keratin. May associate with KRT17.

Plays a central role in hair and nail formation. Essential component of keratin intermediate filaments in the companion layer of the hair follicle. The polypeptide is Keratin, type II cytoskeletal 75 (KRT75) (Bos taurus (Bovine)).